We begin with the raw amino-acid sequence, 384 residues long: Sphingosine 1-phosphate receptor 4 (384 aa).

Residues 1–50 (MNATGTPVAPESCQQLAAGGHSRLIVLHYNHSGRLAGRGGPEDGGLGALR) lie on the Extracellular side of the membrane. 2 N-linked (GlcNAc...) asparagine glycosylation sites follow: asparagine 2 and asparagine 30. A helical transmembrane segment spans residues 51–71 (GLSVAASCLVVLENLLVLAAI). At 72–84 (TSHMRSRRWVYYC) the chain is on the cytoplasmic side. The helical transmembrane segment at 85 to 105 (LVNITLSDLLTGAAYLANVLL) threads the bilayer. At 106–117 (SGARTFRLAPAQ) the chain is on the extracellular side. Residues 118–138 (WFLREGLLFTALAASTFSLLF) traverse the membrane as a helical segment. The Cytoplasmic segment spans residues 139–161 (TAGERFATMVRPVAESGATKTSR). A helical membrane pass occupies residues 162-182 (VYGFIGLCWLLAALLGMLPLL). The Extracellular portion of the chain corresponds to 183–206 (GWNCLCAFDRCSSLLPLYSKRYIL). A helical membrane pass occupies residues 207–227 (FCLVIFAGVLATIMGLYGAIF). The Cytoplasmic portion of the chain corresponds to 228–252 (RLVQASGQKAPRPAARRKARRLLKT). The helical transmembrane segment at 253 to 273 (VLMILLAFLVCWGPLFGLLLA) threads the bilayer. At 274–288 (DVFGSNLWAQEYLRG) the chain is on the extracellular side. The chain crosses the membrane as a helical span at residues 289 to 309 (MDWILALAVLNSAVNPIIYSF). Residues 310–384 (RSREVCRAVL…LSSISSVRSI (75 aa)) lie on the Cytoplasmic side of the membrane. Cysteine 323 carries the S-palmitoyl cysteine lipid modification.

The protein belongs to the G-protein coupled receptor 1 family. Specifically expressed in fetal and adult lymphoid and hematopoietic tissue as well as in lung. Considerable level of expression in adult and fetal spleen as well as adult peripheral leukocytes and lung. Lower expression in adult thymus, lymph node, bone marrow, and appendix as well as in fetal liver, thymus, and lung.

Its subcellular location is the cell membrane. Its function is as follows. Receptor for the lysosphingolipid sphingosine 1-phosphate (S1P). S1P is a bioactive lysophospholipid that elicits diverse physiological effect on most types of cells and tissues. May be involved in cell migration processes that are specific for lymphocytes. The polypeptide is Sphingosine 1-phosphate receptor 4 (S1PR4) (Homo sapiens (Human)).